Consider the following 514-residue polypeptide: 1-pyrroline-5-carboxylate dehydrogenase (514 aa).

Active-site residues include glutamate 286 and cysteine 320.

This sequence belongs to the aldehyde dehydrogenase family. RocA subfamily.

The catalysed reaction is L-glutamate 5-semialdehyde + NAD(+) + H2O = L-glutamate + NADH + 2 H(+). Its pathway is amino-acid degradation; L-proline degradation into L-glutamate; L-glutamate from L-proline: step 2/2. The sequence is that of 1-pyrroline-5-carboxylate dehydrogenase from Staphylococcus saprophyticus subsp. saprophyticus (strain ATCC 15305 / DSM 20229 / NCIMB 8711 / NCTC 7292 / S-41).